Reading from the N-terminus, the 93-residue chain is Small ribosomal subunit protein uS19 (93 aa).

Belongs to the universal ribosomal protein uS19 family.

Protein S19 forms a complex with S13 that binds strongly to the 16S ribosomal RNA. This chain is Small ribosomal subunit protein uS19, found in Desulfitobacterium hafniense (strain DSM 10664 / DCB-2).